We begin with the raw amino-acid sequence, 1311 residues long: Kinase and exchange factor for Rac A (1311 aa).

One can recognise a Protein kinase domain in the interval 18–316 (LVFKDIIGKG…STIVTILESI (299 aa)). ATP-binding positions include 24–32 (IGKGNFGCV) and K45. D138 functions as the Proton acceptor in the catalytic mechanism. Disordered regions lie at residues 169 to 201 (NGSD…KNNG), 360 to 426 (QQQS…TTTT), and 446 to 471 (PLSK…LIGS). Low complexity predominate over residues 451–471 (QQQQQRNQNSSIIDNNSLIGS). The IQ domain occupies 650 to 679 (ELNLIIKLQSRIRGWLVRRRYKIFLSNWKL). The DH domain maps to 691-927 (QWIRLFNQLI…RETSNYIQSQ (237 aa)). Low complexity-rich tracts occupy residues 994-1021 (SKYN…TNSN) and 1031-1044 (STSN…GNNN). Disordered stretches follow at residues 994–1044 (SKYN…GNNN), 1114–1145 (NNPN…NGSI), and 1208–1311 (GTST…FSKD). The segment covering 1117–1137 (NGGGSNNNSIGGGGGGRGGSG) has biased composition (gly residues). Positions 1208–1229 (GTSTPERKTSLVNMSPSTTSSL) are enriched in polar residues. Low complexity predominate over residues 1230–1245 (NNIDSNYNNNNNNVTN). Residues 1246–1257 (TPIKSVTSSPSI) show a composition bias toward polar residues. Residues 1263–1276 (NDNNQQPQLPSQPN) are compositionally biased toward low complexity. Over residues 1277–1287 (EEFQFTVPTTP) the composition is skewed to polar residues. A compositionally biased stretch (basic residues) spans 1290–1303 (KKKKRGSFSSKLKR).

It belongs to the protein kinase superfamily. TKL Ser/Thr protein kinase family. Requires Mg(2+) as cofactor.

It catalyses the reaction L-seryl-[protein] + ATP = O-phospho-L-seryl-[protein] + ADP + H(+). It carries out the reaction L-threonyl-[protein] + ATP = O-phospho-L-threonyl-[protein] + ADP + H(+). In Dictyostelium discoideum (Social amoeba), this protein is Kinase and exchange factor for Rac A (kxcA).